Reading from the N-terminus, the 563-residue chain is MQDEIIDFFRSPALLFYMTLMLTICVVNGSQQVGEVVETEFHAYRLHQYEISGNIYGCKNYRVSYEAVSLGARTLRRTMVTTWRDLLTTDVDDMWALSTGAVLIFIPDNLDELNDIDRKAFIDLEAKLLSAKTDLAVYVAPFNDDAVSILHDVNTRSEKAPTALQHLLQSLSGNTISITSSDQSPELPPSYKPLNIVGRLSSGDRAAPTIAFVAHYDTQSAVPGVSPGADSNGSGIVALLELLAVLSKFYDSPSTRPPYNILFIWTAAGKLNYQGTRHWIDEYQKGFDSADYAKSGLSRKGFSDDRVDLAICIEAIGRKTGGFFMHAGKTPSENSVAAQLLRRLKYFSSISPKKNIELVTKKISLTTVSAWEHEKFNIKRMPAITLSTLPSPSDPARNSILDLPSALDEDELIDNIRLIGEAVLGYILDLPESGPSSDSRVKSEATMLSKDAVDKQRVHHFIRQFASRPRPVGDQRATESITSNLASVAAGYGNVFKSAVTITDAKAFGVTQNRLVAERVKPAVFELVIAAGVFTYLSAFYYIATHSQNTIEGTVAAIRKSIF.

Residues 1–29 (MQDEIIDFFRSPALLFYMTLMLTICVVNG) form the signal peptide. Over 30–522 (SQQVGEVVET…NRLVAERVKP (493 aa)) the chain is Lumenal. Asn-232 carries N-linked (GlcNAc...) asparagine glycosylation. The helical transmembrane segment at 523-543 (AVFELVIAAGVFTYLSAFYYI) threads the bilayer. Residues 544–563 (ATHSQNTIEGTVAAIRKSIF) are Cytoplasmic-facing.

This sequence belongs to the nicastrin family. In terms of assembly, may interact with the levamisole-sensitive nicotinic acetylcholine receptor (L-AChR). May interact with nra-4 in the ER. Expressed in body wall, pharyngeal, and vulval muscles, excretory canal cell, head and motor neurons, and vulval epithelium.

Its subcellular location is the endoplasmic reticulum membrane. Functionally, involved in the recognition and selection of protein complexes to exit the endoplasmic reticulum (ER). In muscles, regulates levamisole-sensitive nicotinic acetylcholine receptor (L-AChR) subunit composition, possibly by allowing only specific L-AChR subunit combinations to exit the ER. Specifically, may promote the inclusion of alpha subunits unc-38 and unc-29 into L-AChR. Regulates L-AChR sensitivity to agonists such as nicotine and levamisole at neuro-muscular junctions. In touch neurons, may prevent ER exit of incorrectly folded mec-4-mec-10 ion channel. The polypeptide is Nicalin (Caenorhabditis elegans).